A 571-amino-acid chain; its full sequence is Sulfite reductase [NADPH] hemoprotein beta-component (571 aa).

[4Fe-4S] cluster is bound by residues Cys-436, Cys-442, Cys-481, and Cys-485. Cys-485 lines the siroheme pocket.

The protein belongs to the nitrite and sulfite reductase 4Fe-4S domain family. In terms of assembly, alpha(8)-beta(8). The alpha component is a flavoprotein, the beta component is a hemoprotein. Siroheme serves as cofactor. It depends on [4Fe-4S] cluster as a cofactor.

It catalyses the reaction hydrogen sulfide + 3 NADP(+) + 3 H2O = sulfite + 3 NADPH + 4 H(+). It functions in the pathway sulfur metabolism; hydrogen sulfide biosynthesis; hydrogen sulfide from sulfite (NADPH route): step 1/1. In terms of biological role, component of the sulfite reductase complex that catalyzes the 6-electron reduction of sulfite to sulfide. This is one of several activities required for the biosynthesis of L-cysteine from sulfate. This is Sulfite reductase [NADPH] hemoprotein beta-component from Bacillus velezensis (strain DSM 23117 / BGSC 10A6 / LMG 26770 / FZB42) (Bacillus amyloliquefaciens subsp. plantarum).